The sequence spans 244 residues: 5-oxoprolinase subunit A (244 aa).

This sequence belongs to the LamB/PxpA family. As to quaternary structure, forms a complex composed of PxpA, PxpB and PxpC.

The enzyme catalyses 5-oxo-L-proline + ATP + 2 H2O = L-glutamate + ADP + phosphate + H(+). Functionally, catalyzes the cleavage of 5-oxoproline to form L-glutamate coupled to the hydrolysis of ATP to ADP and inorganic phosphate. The polypeptide is 5-oxoprolinase subunit A (Salmonella paratyphi A (strain ATCC 9150 / SARB42)).